A 360-amino-acid polypeptide reads, in one-letter code: MTAPIRPQPGILDIALYQGGASKIAGHADPLKLSSNENPFGPSPAAVQAMADAVASSHRYPNTDHADLRAAISEIHGLEADNIICGVGSDEVIHFLCQCYAGPGDEVLYTQHGFGMYPIAAKAAGATPVQVAEDARHVDVDALIAGITPATRLIFIANPSNPCATMIDNGEITRLADALPDQCLLILDGAYVEFADGYDGGKNLVEARDNVVMTRTFSKVYGLGGLRVGYGYGPRHVIDTLNRIRGPFNLSGMALAGAEAAVRDVDWVNECLRVNADERARLVGGLRQLGLACDDSHANFVLARFASEAAADAADAHLKRDGIIVRAPKSYGLPDCLRITVGRPEDNSRVLASLTALVAA.

An N6-(pyridoxal phosphate)lysine modification is found at K219.

It belongs to the class-II pyridoxal-phosphate-dependent aminotransferase family. Histidinol-phosphate aminotransferase subfamily. As to quaternary structure, homodimer. Pyridoxal 5'-phosphate serves as cofactor.

The catalysed reaction is L-histidinol phosphate + 2-oxoglutarate = 3-(imidazol-4-yl)-2-oxopropyl phosphate + L-glutamate. It participates in amino-acid biosynthesis; L-histidine biosynthesis; L-histidine from 5-phospho-alpha-D-ribose 1-diphosphate: step 7/9. The polypeptide is Histidinol-phosphate aminotransferase (Jannaschia sp. (strain CCS1)).